The sequence spans 229 residues: Type III pantothenate kinase (229 aa).

7–14 serves as a coordination point for ATP; it reads DVGNSSVD. Residues Tyr78 and 85–88 each bind substrate; that span reads GTDR. Catalysis depends on Asp87, which acts as the Proton acceptor. Thr110 serves as a coordination point for ATP. Thr161 contributes to the substrate binding site.

The protein belongs to the type III pantothenate kinase family. As to quaternary structure, homodimer. NH4(+) is required as a cofactor. The cofactor is K(+).

The protein localises to the cytoplasm. It catalyses the reaction (R)-pantothenate + ATP = (R)-4'-phosphopantothenate + ADP + H(+). It participates in cofactor biosynthesis; coenzyme A biosynthesis; CoA from (R)-pantothenate: step 1/5. In terms of biological role, catalyzes the phosphorylation of pantothenate (Pan), the first step in CoA biosynthesis. The polypeptide is Type III pantothenate kinase (Aquifex aeolicus (strain VF5)).